A 747-amino-acid chain; its full sequence is Mediator of RNA polymerase II transcription subunit 25 (747 aa).

The interval M1–L226 is interaction with the Mediator complex. 2 disordered regions span residues G233 to V274 and L299 to G390. 2 stretches are compositionally biased toward pro residues: residues Q263 to Y272 and P326 to S342. The tract at residues L389 to N543 is interaction with VP16. Residues V395 to K545 are interaction with CREBBP. A disordered region spans residues Q548–I747. Interaction with RARA regions lie at residues A564–P653 and P640–Q707. The segment covering A598–A611 has biased composition (low complexity). Residues Q612 to I634 show a composition bias toward pro residues. The short motif at L646–L650 is the LXXLL motif element. Pro residues-rich tracts occupy residues N652–Q664, P673–H683, and L691–P713. Asymmetric dimethylarginine is present on R725. The span at M738 to I747 shows a compositional bias: acidic residues.

This sequence belongs to the Mediator complex subunit 25 family. Component of the Mediator complex, which is composed of MED1, MED4, MED6, MED7, MED8, MED9, MED10, MED11, MED12, MED13, MED13L, MED14, MED15, MED16, MED17, MED18, MED19, MED20, MED21, MED22, MED23, MED24, MED25, MED26, MED27, MED29, MED30, MED31, CCNC, CDK8 and CDC2L6/CDK11. The MED12, MED13, CCNC and CDK8 subunits form a distinct module termed the CDK8 module. Mediator containing the CDK8 module is less active than Mediator lacking this module in supporting transcriptional activation. Individual preparations of the Mediator complex lacking one or more distinct subunits have been variously termed ARC, CRSP, DRIP, PC2, SMCC and TRAP. Interacts with CREBBP. Interacts with ESR1, GR, RARA, RXRA and THRB in a ligand-dependent fashion. Binds the Herpes simplex virus activator VP16. In terms of tissue distribution, ubiquitously expressed. Highest levels in brain, heart, kidney, peripheral leukocytes, placenta, skeletal muscle and spleen.

Its subcellular location is the nucleus. Component of the Mediator complex, a coactivator involved in the regulated transcription of nearly all RNA polymerase II-dependent genes. Mediator functions as a bridge to convey information from gene-specific regulatory proteins to the basal RNA polymerase II transcription machinery. Mediator is recruited to promoters by direct interactions with regulatory proteins and serves as a scaffold for the assembly of a functional preinitiation complex with RNA polymerase II and the general transcription factors. Required for RARA/RXRA-mediated transcription. The protein is Mediator of RNA polymerase II transcription subunit 25 (MED25) of Homo sapiens (Human).